Consider the following 389-residue polypeptide: Indole-3-acetate monooxygenase (389 aa).

It belongs to the HpaH/HsaA monooxygenase family.

The catalysed reaction is (indol-3-yl)acetate + NADH + O2 + H(+) = 2-hydroxy-(1H-indol-3-yl)acetate + NAD(+) + H2O. The enzyme catalyses indole + NADH + O2 + H(+) = indoxyl + NAD(+) + H2O. Its function is as follows. Involved in the degradation of the plant hormone indole-3-acetic acid (IAA). Catalyzes the first step of the pathway, the conversion of IAA to 2-hydroxy-IAA (2-OH-IAA). Can also convert indole to indoxyl, which spontaneously dimerizes in the presence of oxygen to form the blue pigment indigo. This is Indole-3-acetate monooxygenase from Pseudomonas putida (Arthrobacter siderocapsulatus).